The following is a 252-amino-acid chain: 5'-nucleotidase SurE (252 aa).

Aspartate 8, aspartate 9, serine 39, and asparagine 96 together coordinate a divalent metal cation.

Belongs to the SurE nucleotidase family. A divalent metal cation is required as a cofactor.

The protein localises to the cytoplasm. The catalysed reaction is a ribonucleoside 5'-phosphate + H2O = a ribonucleoside + phosphate. Functionally, nucleotidase that shows phosphatase activity on nucleoside 5'-monophosphates. The sequence is that of 5'-nucleotidase SurE from Petrotoga mobilis (strain DSM 10674 / SJ95).